We begin with the raw amino-acid sequence, 251 residues long: Myozenin-3 (251 aa).

Phosphoserine is present on S31. The tract at residues 50–67 is binding to ACTN2, PPP3CA and TCAP; the sequence is LLFQKRQRRVQKFTFELA. The interval 67–110 is binding to FLNC; the sequence is AASQRAMLAGSARRKVTGTAESGTVANANGPEGPNYRSELHIFP. The disordered stretch occupies residues 79–102; the sequence is RRKVTGTAESGTVANANGPEGPNY. Positions 186 to 207 are binding to ACTN2; it reads PSPNDYRNFNKTPVPFGGPLVG.

Belongs to the myozenin family. Interacts with ACTN2, LDB3, FLNC, PPP3CA and TCAP. In terms of tissue distribution, expressed specifically in skeletal muscle. Not detected in heart.

The protein localises to the cytoplasm. Its subcellular location is the myofibril. It is found in the sarcomere. The protein resides in the z line. Myozenins may serve as intracellular binding proteins involved in linking Z line proteins such as alpha-actinin, gamma-filamin, TCAP/telethonin, LDB3/ZASP and localizing calcineurin signaling to the sarcomere. Plays an important role in the modulation of calcineurin signaling. May play a role in myofibrillogenesis. This chain is Myozenin-3, found in Homo sapiens (Human).